Reading from the N-terminus, the 576-residue chain is Adenine deaminase (576 aa).

It belongs to the metallo-dependent hydrolases superfamily. Adenine deaminase family. Mn(2+) is required as a cofactor.

It catalyses the reaction adenine + H2O + H(+) = hypoxanthine + NH4(+). The polypeptide is Adenine deaminase (Syntrophobacter fumaroxidans (strain DSM 10017 / MPOB)).